Reading from the N-terminus, the 89-residue chain is Large ribosomal subunit protein bL31B (89 aa).

The protein belongs to the bacterial ribosomal protein bL31 family. Type B subfamily. In terms of assembly, part of the 50S ribosomal subunit.

The protein is Large ribosomal subunit protein bL31B of Actinobacillus pleuropneumoniae serotype 5b (strain L20).